The sequence spans 1052 residues: MSDAVGGVYPRVDMSGGTNVFPDMERQVLEYWKDDETFKASLTNREENPEYVFYDGPPFANGLPHYGHLLTGYVKDIVPRYQTMKGKLVNRVFGWDCHGLPAELEAEKQLGIKDKGEIEAMGLESFNNYCAKSVLEYTQEWKDYVTRQARWVDFDNGYKTMDMDFMESVMWAFKTLYDKGLIYQGFRVLPYSWAEHTPLSNQETRLDDSYKMRQDPTLTVTFPITGVKDDSAADASLVGAYALAWTTTPWTLPSNLALAVNPQVNYVEVKVGDQGAEAIRGQRVLLAEALVGAYAKELGEDHEVLTVRPGSELVGLTYQPIFSYFADHENAFQILAAEYVTTEDGTGIVHQAPAFGEDDMNTCKEYGIEVVIPVDMDGKFTSLVPEYQGQLVFDANKSIIADLKAAGRVVRHQTIEHSYPHSWRSGEPLIYMALPSWFVEVTKIRDRMVELNKEIDWMPSHIRDGQFGKWLEGARDWNISRNRYWGSPIPVWVSDDENYPRVDVYGSLEELERDFGVRPESLHRPHIDELTRPNPDDPTGKSTMRRVPEVLDCWFESGSMPFAQKHYPFENKDWFDTHSPADFIVEYSGQTRGWFYTLHVLATALFDRPAFKKVVAHGIVLGDDGTKMSKSRRNYPDVNEVFNRDGSDAMRWFLMSSPILRGGNLIVTEQGIREGVRQALLPMWNAYSFLQLYSSKPAQWSVDSSDVLDRYILAKLHDVVAAVGDALDNTDIARACDEVRTFCDALTNWYVRRSRDRFWAGDTEHPEAFYTLYTVLETLTRVTAPLLPMVSEVIWRGLTGERSVHLADFPQADQFPADDDLVRAMDEVRGVCSATSSVRKAHKLRNRLPLPKVTVALPESARLADFADIIRDEVNVKEVALTSDVDSVGRFDVVVNAKVAGPRLCKDVQRAIKAVKSGNYERRGDTVVADGIELVAGEFTERLVAADPDSTTQIDGVDGLVVLDMTLTEELEAEGWAADVIRGLQDARKASGFEVSDRIEVKLVVPEEKKEWALRHTDMIAGEVLATSFEVVTGEPAEHDIVAGVTATVQKV.

Positions 58–68 match the 'HIGH' region motif; it reads PFANGLPHYGH. The short motif at 627–631 is the 'KMSKS' region element; sequence KMSKS. K630 provides a ligand contact to ATP.

This sequence belongs to the class-I aminoacyl-tRNA synthetase family. IleS type 2 subfamily. In terms of assembly, monomer. Requires Zn(2+) as cofactor.

It is found in the cytoplasm. The enzyme catalyses tRNA(Ile) + L-isoleucine + ATP = L-isoleucyl-tRNA(Ile) + AMP + diphosphate. In terms of biological role, catalyzes the attachment of isoleucine to tRNA(Ile). As IleRS can inadvertently accommodate and process structurally similar amino acids such as valine, to avoid such errors it has two additional distinct tRNA(Ile)-dependent editing activities. One activity is designated as 'pretransfer' editing and involves the hydrolysis of activated Val-AMP. The other activity is designated 'posttransfer' editing and involves deacylation of mischarged Val-tRNA(Ile). The chain is Isoleucine--tRNA ligase from Corynebacterium diphtheriae (strain ATCC 700971 / NCTC 13129 / Biotype gravis).